The chain runs to 243 residues: Zinc import ATP-binding protein ZnuC (243 aa).

In terms of domain architecture, ABC transporter spans 8 to 225 (LNLSNVSYYI…SEFQKLFGHH (218 aa)). Residue 40 to 47 (GPNGAGKS) participates in ATP binding.

This sequence belongs to the ABC transporter superfamily. Zinc importer (TC 3.A.1.15.5) family. As to quaternary structure, the complex is composed of two ATP-binding proteins (ZnuC), two transmembrane proteins (ZnuB) and a solute-binding protein (ZnuA).

The protein localises to the cell inner membrane. The enzyme catalyses Zn(2+)(out) + ATP(in) + H2O(in) = Zn(2+)(in) + ADP(in) + phosphate(in) + H(+)(in). Part of the ABC transporter complex ZnuABC involved in zinc import. Responsible for energy coupling to the transport system. This is Zinc import ATP-binding protein ZnuC from Psychrobacter arcticus (strain DSM 17307 / VKM B-2377 / 273-4).